Here is a 1515-residue protein sequence, read N- to C-terminus: Homeobox protein cut-like 1 (1515 aa).

Positions leucine 56–serine 361 form a coiled coil. A compositionally biased stretch (polar residues) spans glutamate 393–serine 405. Disordered stretches follow at residues glutamate 393–glycine 453, proline 509–glycine 546, proline 644–aspartate 666, and leucine 680–aspartate 702. Residues glycine 422–leucine 432 show a composition bias toward pro residues. Serine 427 carries the phosphoserine modification. The span at threonine 436–histidine 447 shows a compositional bias: polar residues. A compositionally biased stretch (low complexity) spans serine 514 to serine 544. Positions alanine 540–arginine 627 form a DNA-binding region, CUT 1. Serine 761 is modified (phosphoserine). 2 disordered regions span residues proline 769–alanine 871 and tyrosine 884–proline 923. Residues lysine 783, lysine 809, and lysine 840 each participate in a glycyl lysine isopeptide (Lys-Gly) (interchain with G-Cter in SUMO2) cross-link. The span at proline 828–alanine 852 shows a compositional bias: basic and acidic residues. Polar residues-rich tracts occupy residues glycine 853 to serine 868 and tyrosine 884 to leucine 906. At serine 904 the chain carries Phosphoserine. The CUT 2 DNA-binding region spans glutamine 929–glutamine 1016. Residues glutamine 1032–threonine 1044 are compositionally biased toward polar residues. The disordered stretch occupies residues glutamine 1032–glycine 1105. Over residues serine 1045–serine 1061 the composition is skewed to low complexity. Residues serine 1054 and serine 1064 each carry the phosphoserine modification. Residues glutamine 1112 to methionine 1199 constitute a DNA-binding region (CUT 3). Residues arginine 1207–proline 1242 form a disordered region. Positions leucine 1239 to leucine 1298 form a DNA-binding region, homeobox. Position 1265 is a phosphoserine (serine 1265). Lysine 1279 is covalently cross-linked (Glycyl lysine isopeptide (Lys-Gly) (interchain with G-Cter in SUMO2)). The segment at serine 1307 to lysine 1488 is disordered. A compositionally biased stretch (low complexity) spans alanine 1313 to serine 1328. Over residues aspartate 1331 to glutamate 1343 the composition is skewed to acidic residues. Residue serine 1332 is modified to Phosphoserine. A compositionally biased stretch (basic and acidic residues) spans alanine 1365 to lysine 1378. Low complexity predominate over residues alanine 1406 to serine 1468. Phosphoserine occurs at positions 1468, 1496, and 1506.

Belongs to the CUT homeobox family. Interacts with BANP. Interacts with SATB1 (via DNA-binding domains); the interaction inhibits the attachment of both proteins to DNA. In terms of processing, phosphorylated by PKA. Post-translationally, as cells progress into S phase, a fraction of CUX1 molecules is proteolytically processed into N-terminally truncated proteins of 110 kDa by CTSL. Cell cycle-dependent processing of CUX1 serves to generate a CDP/Cux p110 with distinct DNA binding and transcriptional properties. Testis-specific where it is expressed in germ cells.

It is found in the nucleus. Functionally, transcription factor involved in the control of neuronal differentiation in the brain. Regulates dendrite development and branching, and dendritic spine formation in cortical layers II-III. Also involved in the control of synaptogenesis. In addition, it has probably a broad role in mammalian development as a repressor of developmentally regulated gene expression. May act by preventing binding of positively-activing CCAAT factors to promoters. Component of nf-munr repressor; binds to the matrix attachment regions (MARs) (5' and 3') of the immunoglobulin heavy chain enhancer. Represses T-cell receptor (TCR) beta enhancer function by binding to MARbeta, an ATC-rich DNA sequence located upstream of the TCR beta enhancer. Binds to the TH enhancer; may require the basic helix-loop-helix protein TCF4 as a coactivator. Plays a role in cell cycle progression, in particular at the G1/S transition. As cells progress into S phase, a fraction of CUX1 molecules is proteolytically processed into N-terminally truncated proteins of 110 kDa. While CUX1 only transiently binds to DNA and carries the CCAAT-displacement activity, CDP/Cux p110 makes a stable interaction with DNA and stimulates expression of genes such as POLA1. The chain is Homeobox protein cut-like 1 from Mus musculus (Mouse).